We begin with the raw amino-acid sequence, 865 residues long: Leucine--tRNA ligase (865 aa).

A 'HIGH' region motif is present at residues 48-58; that stretch reads PYPSGQLHVGH. The short motif at 626 to 630 is the 'KMSKS' region element; the sequence is KMSKS. Residue lysine 629 coordinates ATP.

This sequence belongs to the class-I aminoacyl-tRNA synthetase family.

The protein resides in the cytoplasm. The catalysed reaction is tRNA(Leu) + L-leucine + ATP = L-leucyl-tRNA(Leu) + AMP + diphosphate. This chain is Leucine--tRNA ligase, found in Gluconobacter oxydans (strain 621H) (Gluconobacter suboxydans).